Here is a 529-residue protein sequence, read N- to C-terminus: MSDENGPSKVDLQTAMRKMRALPPNKLCFDCGARNPTWCTVTYGVFLCIDCSAVHRNLGVHLTFVRSTNLDTNWTWLQLRAMQLGGNGNANQFFKAHGCNTTEAQQKYKSRAAQMYRDKLSTLCQEAQRKFGTQLIIDTVTHAEEKPAEEEDFFAQDFGHTSASATSLSSDAYIADHKSEDSTHGPSVDHLDSSVAVPTSAPVSVILKKPIKKATLGAKKNALGAQKVRINFDEIEQRAAEKERQTAAEVAANKLAYQTELDGKKKSDDAAALQKLSAKFAMQDIDAQRKQMEAKVAKDPTKAASVDRLGMGGVGRSRAAHSVAGGIRSIKQDDVLTFKKPSQPKEDDDWEVIDDKYGKKSTNNEDDFFSKDYTSSSSKKTTKEDDFFDSFETQPVQKSRYTASSSSSSTSRAPTTRLTAGASPISDVDLQKKFGNAKAISSDMYFGTPEMDCETRSALTKCEGQTSFGSEDLWGNGSQQRQSSQVPDMSDLKDSFRAGASKVAEKWSTLSSSFSTYMSRAPPATGEKT.

Residues 13-129 (QTAMRKMRAL…LSTLCQEAQR (117 aa)) enclose the Arf-GAP domain. A C4-type zinc finger spans residues 28-51 (CFDCGARNPTWCTVTYGVFLCIDC). The segment covering 291-301 (QMEAKVAKDPT) has biased composition (basic and acidic residues). Disordered regions lie at residues 291 to 313 (QMEA…GMGG), 335 to 357 (VLTF…DDKY), 398 to 424 (KSRY…GASP), and 468 to 493 (FGSE…SDLK). Low complexity predominate over residues 399–420 (SRYTASSSSSSTSRAPTTRLTA). The segment covering 476–487 (NGSQQRQSSQVP) has biased composition (polar residues).

GTPase-activating protein for the ADP ribosylation factor family. This is an uncharacterized protein from Caenorhabditis elegans.